A 733-amino-acid polypeptide reads, in one-letter code: Wall-associated receptor kinase 5 (733 aa).

An N-terminal signal peptide occupies residues 1–23 (MKVHSLFLMAIFFYLAYTQLVKA). Residues 24 to 330 (QPRDDCQTRC…IDTPKEEPKY (307 aa)) lie on the Extracellular side of the membrane. Residues Asn57, Asn77, Asn110, Asn137, Asn184, Asn206, Asn218, Asn232, and Asn247 are each glycosylated (N-linked (GlcNAc...) asparagine). The 48-residue stretch at 231-278 (GNQTCEQVVGRNICGGNSTCFDSTRGKGYNCKCLQGFDGNPYLSDGCQ) folds into the EGF-like 1 domain. 6 disulfides stabilise this stretch: Cys235–Cys250, Cys244–Cys261, Cys263–Cys277, Cys283–Cys296, Cys290–Cys305, and Cys307–Cys320. The EGF-like 2; calcium-binding domain occupies 279–321 (DINECTTRIHNCSDTSTCENTLGSFHCQCPSGSDLNTTTMSCI). Residue Asn289 is glycosylated (N-linked (GlcNAc...) asparagine). An N-linked (GlcNAc...) asparagine glycan is attached at Asn314. A helical transmembrane segment spans residues 331 to 351 (LGWTTVLLGTTIGFLIILLTI). Over 352-733 (SYIQQKMRHR…VTRLDIETGR (382 aa)) the chain is Cytoplasmic. A Phosphothreonine modification is found at Thr397. The Protein kinase domain maps to 408–691 (YNESRILGQG…RVKTTKHQWS (284 aa)). Residues 414-422 (LGQGGQGTV) and Lys436 each bind ATP. Tyr481 is subject to Phosphotyrosine. The Proton acceptor role is filled by Asp533. Thr567 and Thr572 each carry phosphothreonine. Tyr580 is subject to Phosphotyrosine.

Belongs to the protein kinase superfamily. Ser/Thr protein kinase family. As to expression, predominantly expressed in green tissues such as stems and leaves.

Its subcellular location is the membrane. It carries out the reaction L-seryl-[protein] + ATP = O-phospho-L-seryl-[protein] + ADP + H(+). The catalysed reaction is L-threonyl-[protein] + ATP = O-phospho-L-threonyl-[protein] + ADP + H(+). In terms of biological role, serine/threonine-protein kinase that may function as a signaling receptor of extracellular matrix component. Binding to pectin may have significance in the control of cell expansion, morphogenesis and development. The sequence is that of Wall-associated receptor kinase 5 (WAK5) from Arabidopsis thaliana (Mouse-ear cress).